The following is a 541-amino-acid chain: Berberine bridge enzyme-like 24 (541 aa).

Residues Met1–Ala32 form the signal peptide. Cys41 and Cys105 are joined by a disulfide. Residue Asn62 is glycosylated (N-linked (GlcNAc...) asparagine). In terms of domain architecture, FAD-binding PCMH-type spans Ser83–Val259. The 6-(S-cysteinyl)-8alpha-(pros-histidyl)-FAD (His-Cys) cross-link spans His120 to Cys184. N-linked (GlcNAc...) asparagine glycosylation is found at Asn309, Asn408, and Asn435.

This sequence belongs to the oxygen-dependent FAD-linked oxidoreductase family. Requires FAD as cofactor. The FAD cofactor is bound via a bicovalent 6-S-cysteinyl, 8alpha-N1-histidyl FAD linkage.

It is found in the secreted. The protein resides in the cell wall. The polypeptide is Berberine bridge enzyme-like 24 (Arabidopsis thaliana (Mouse-ear cress)).